We begin with the raw amino-acid sequence, 250 residues long: Small ribosomal subunit protein uS2 (250 aa).

It belongs to the universal ribosomal protein uS2 family.

The protein is Small ribosomal subunit protein uS2 of Paraburkholderia phymatum (strain DSM 17167 / CIP 108236 / LMG 21445 / STM815) (Burkholderia phymatum).